An 83-amino-acid polypeptide reads, in one-letter code: Spanin, outer lipoprotein subunit (83 aa).

A signal peptide spans 1–50 (MSTLRELRLRRALKEQSMRYLLSIKKTLPRWKGALIGLFLICVATISGCA).

This sequence belongs to the T7likevirus o-spanin family. In terms of assembly, homodimer. Interacts (via C-terminus) with the spanin inner membrane subunit (via C-terminus). Part of the spanin complex which spans the entire periplasmic space. The spanin complex is composed of spanin inner membrane subunit and spanin outer membrane subunit.

The protein localises to the host cell outer membrane. Its function is as follows. Component of the spanin complex that disrupts the host outer membrane and participates in cell lysis during virus exit. The spanin complex conducts the final step in host lysis by disrupting the outer membrane after holin and endolysin action have permeabilized the inner membrane and degraded the host peptidoglycans. Host outer membrane disruption is possibly due to local fusion between the inner and outer membrane performed by the spanin complex. The protein is Spanin, outer lipoprotein subunit of Escherichia phage T7 (Bacteriophage T7).